The following is a 508-amino-acid chain: Pancreatic alpha-amylase 2a5 (508 aa).

Residues Met-1–Ala-15 form the signal peptide. Gln-16 bears the Pyrrolidone carboxylic acid mark. Disulfide bonds link Cys-43/Cys-101, Cys-85/Cys-130, and Cys-156/Cys-172. Positions 115, 170, and 179 each coordinate Ca(2+). Arg-207 provides a ligand contact to chloride. Asp-209 serves as the catalytic Nucleophile. A Ca(2+)-binding site is contributed by His-213. Catalysis depends on Glu-245, which acts as the Proton donor. The chloride site is built by Asn-310 and Arg-349. 2 disulfides stabilise this stretch: Cys-390/Cys-396 and Cys-462/Cys-474.

It belongs to the glycosyl hydrolase 13 family. In terms of assembly, monomer. The cofactor is Ca(2+). It depends on chloride as a cofactor.

It is found in the secreted. It localises to the extracellular space. It catalyses the reaction Endohydrolysis of (1-&gt;4)-alpha-D-glucosidic linkages in polysaccharides containing three or more (1-&gt;4)-alpha-linked D-glucose units.. In Mus musculus (Mouse), this protein is Pancreatic alpha-amylase 2a5.